A 368-amino-acid chain; its full sequence is Methionine import ATP-binding protein MetN (368 aa).

The region spanning 5–260 (IELNNLSVQF…PKEALTKQFI (256 aa)) is the ABC transporter domain. An ATP-binding site is contributed by 41–48 (GYSGAGKS).

The protein belongs to the ABC transporter superfamily. Methionine importer (TC 3.A.1.24) family. In terms of assembly, the complex is composed of two ATP-binding proteins (MetN), two transmembrane proteins (MetI) and a solute-binding protein (MetQ).

It localises to the cell membrane. The enzyme catalyses L-methionine(out) + ATP + H2O = L-methionine(in) + ADP + phosphate + H(+). It carries out the reaction D-methionine(out) + ATP + H2O = D-methionine(in) + ADP + phosphate + H(+). Part of the ABC transporter complex MetNIQ involved in methionine import. Responsible for energy coupling to the transport system. This Lactococcus lactis subsp. lactis (strain IL1403) (Streptococcus lactis) protein is Methionine import ATP-binding protein MetN.